Here is a 58-residue protein sequence, read N- to C-terminus: Large ribosomal subunit protein uL30 (58 aa).

The protein belongs to the universal ribosomal protein uL30 family. As to quaternary structure, part of the 50S ribosomal subunit.

The sequence is that of Large ribosomal subunit protein uL30 from Vibrio vulnificus (strain CMCP6).